The following is a 229-amino-acid chain: Peptidase E (229 aa).

Active-site charge relay system residues include Ser-120, Asp-135, and His-157.

It belongs to the peptidase S51 family.

The protein localises to the cytoplasm. The enzyme catalyses Dipeptidase E catalyzes the hydrolysis of dipeptides Asp-|-Xaa. It does not act on peptides with N-terminal Glu, Asn or Gln, nor does it cleave isoaspartyl peptides.. In terms of biological role, hydrolyzes dipeptides containing N-terminal aspartate residues. May play a role in allowing the cell to use peptide aspartate to spare carbon otherwise required for the synthesis of the aspartate family of amino acids. This chain is Peptidase E, found in Salmonella paratyphi A (strain AKU_12601).